A 432-amino-acid chain; its full sequence is MNIAVVGLSHKTAPVEVREKLSVPEDGLEGAIAQLCSYPHIEEVAILSTCNRLEIYIVTSETESGIREVTQFLSEWSHLPLRELRQHLFILLHQDAVMHLMRVAAGLDSLVIGEGQILSQVKNTHKLGQQYNGIGTILNRLFKQAITAGKRVRTETSIGTGAVSISSAAVELAQLKTPCLADCRVAVLGAGKMSRLVVQHLLAKGANQIAILNRSTERARELANQFSEASLQIHSLAELFNVITRYDLIFTGTSATEPLLDRSKLEPVLEVNQSLMIIDIAVPRNVHANVNELEQVQVFNVDDLKAVVAQNQESRRAMAMEAEALLEEELTAFDVWWRSLETVPTISSLRDKIETIREQELEKALSRLGSEFAEKHQEVIEALTRGIVNKILHDPMVQLRAQQDRETRRRAMQSLQMLFNLPVNDSVVNVNS.

Residues 49-52, serine 109, 114-116, and glutamine 120 each bind substrate; these read TCNR and EGQ. Catalysis depends on cysteine 50, which acts as the Nucleophile. 189 to 194 lines the NADP(+) pocket; that stretch reads GAGKMS.

Belongs to the glutamyl-tRNA reductase family. In terms of assembly, homodimer.

It catalyses the reaction (S)-4-amino-5-oxopentanoate + tRNA(Glu) + NADP(+) = L-glutamyl-tRNA(Glu) + NADPH + H(+). Its pathway is porphyrin-containing compound metabolism; protoporphyrin-IX biosynthesis; 5-aminolevulinate from L-glutamyl-tRNA(Glu): step 1/2. The protein operates within porphyrin-containing compound metabolism; chlorophyll biosynthesis. Its function is as follows. Catalyzes the NADPH-dependent reduction of glutamyl-tRNA(Glu) to glutamate 1-semialdehyde (GSA). This chain is Glutamyl-tRNA reductase, found in Cyanothece sp. (strain PCC 7425 / ATCC 29141).